A 270-amino-acid polypeptide reads, in one-letter code: Regulatory protein RecX (270 aa).

It belongs to the RecX family.

The protein resides in the cytoplasm. Modulates RecA activity. This chain is Regulatory protein RecX, found in Bacillus cytotoxicus (strain DSM 22905 / CIP 110041 / 391-98 / NVH 391-98).